Reading from the N-terminus, the 592-residue chain is Frizzled-9 (592 aa).

The signal sequence occupies residues 1–23; it reads MAVPPLLRGALLLWQLLATGGAA. Topologically, residues 24–230 are extracellular; that stretch reads LEIGRFDPER…EVFWSRRDKD (207 aa). The region spanning 35-156 is the FZ domain; sequence RGPAPCQAME…NDPHALCMEA (122 aa). Disulfide bonds link cysteine 40/cysteine 101, cysteine 48/cysteine 94, cysteine 85/cysteine 123, cysteine 112/cysteine 153, and cysteine 116/cysteine 140. N-linked (GlcNAc...) asparagine glycosylation occurs at asparagine 54. The tract at residues 59–173 is required for Wnt-activated receptor activity; that stretch reads PNLLGHTSQG…PTEPHKGLGM (115 aa). N-linked (GlcNAc...) asparagine glycosylation is present at asparagine 159. The chain crosses the membrane as a helical span at residues 231–251; it reads FALVWMAVWSALCFFSTAFTV. At 252-267 the chain is on the cytoplasmic side; it reads FTFLLEPHRFQYPERP. Residues 268-288 form a helical membrane-spanning segment; it reads IIFLSMCYNVYSLAFLIRAVA. Topologically, residues 289–316 are extracellular; that stretch reads GAQSVACDQEAGALYVIQEGLENTGCTL. A helical transmembrane segment spans residues 317–337; the sequence is VFLLLYYFGMASSLWWVVLTL. Over 338–356 the chain is Cytoplasmic; sequence TWFLAAGKKWGHEAIEAHG. A helical transmembrane segment spans residues 357 to 377; it reads SYFHMAAWGLPALKTIVVLTL. Topologically, residues 378 to 401 are extracellular; the sequence is RKVAGDELTGLCYVASMDPAALTG. The chain crosses the membrane as a helical span at residues 402–422; it reads FVLVPLSCYLVLGTSFLLTGF. Topologically, residues 423–448 are cytoplasmic; the sequence is VALFHIRKIMKTGGTNTEKLEKLMVK. A helical transmembrane segment spans residues 449 to 469; it reads IGVFSILYTVPATCVIVCYVY. Residues 470–509 lie on the Extracellular side of the membrane; sequence ERLNMDFWRLRATEQPCTAATVPGGRRDCSLPGGSVPTVA. A helical membrane pass occupies residues 510–530; sequence VFMLKIFMSLVVGITSGVWVW. The Cytoplasmic segment spans residues 531–592; the sequence is SSKTFQTWQS…DPSLENPTHL (62 aa). The short motif at 533 to 538 is the Lys-Thr-X-X-X-Trp motif, mediates interaction with the PDZ domain of Dvl family members element; it reads KTFQTW. Residues 555-592 form a required for CTNNB1 accumulation and TCF transcription factor activity region; sequence ACRTPGGYGRGTHCHYKAPTVVLHMTKTDPSLENPTHL.

This sequence belongs to the G-protein coupled receptor Fz/Smo family. In terms of processing, ubiquitinated by ZNRF3, leading to its degradation by the proteasome. As to expression, in the embryo, found in the neural tube, trunk skeletal muscle precursors (myotomes), limb skeletal anlagen, craniofacial regions and nephric ducts. In the adult, expression is abundant in heart, brain, testis and skeletal muscle. In the testis, expressed in all spermatogenic cell types. Lower levels in adult lung, liver and kidney. Barely detectable in spleen. Expressed also in chondrocytes.

The protein localises to the cell membrane. In terms of biological role, receptor for WNT2 that is coupled to the beta-catenin canonical signaling pathway, which leads to the activation of disheveled proteins, inhibition of GSK-3 kinase, nuclear accumulation of beta-catenin and activation of Wnt target genes. Plays a role in neuromuscular junction (NMJ) assembly by negatively regulating the clustering of acetylcholine receptors (AChR) through the beta-catenin canonical signaling pathway. May play a role in neural progenitor cells (NPCs) viability through the beta-catenin canonical signaling pathway by negatively regulating cell cycle arrest leading to inhibition of neuron apoptotic process. During hippocampal development, regulates neuroblast proliferation and apoptotic cell death. Controls bone formation through non canonical Wnt signaling mediated via ISG15. Positively regulates bone regeneration through non canonical Wnt signaling. The polypeptide is Frizzled-9 (Fzd9) (Mus musculus (Mouse)).